A 441-amino-acid chain; its full sequence is Methionine aminopeptidase 2A (441 aa).

The disordered stretch occupies residues methionine 1 to glutamine 103. Positions alanine 18–threonine 33 are enriched in polar residues. Residues aspartate 37–threonine 62 are compositionally biased toward basic and acidic residues. Positions lysine 63–serine 76 are enriched in basic residues. Histidine 194 contacts substrate. The a divalent metal cation site is built by aspartate 214, aspartate 225, and histidine 294. Histidine 302 is a substrate binding site. Residues glutamate 327 and glutamate 422 each coordinate a divalent metal cation.

It belongs to the peptidase M24A family. Methionine aminopeptidase eukaryotic type 2 subfamily. Co(2+) is required as a cofactor. The cofactor is Zn(2+). Requires Mn(2+) as cofactor. Fe(2+) serves as cofactor. Ubiquitous. Preferentially expressed in roots.

The protein resides in the cytoplasm. It catalyses the reaction Release of N-terminal amino acids, preferentially methionine, from peptides and arylamides.. Functionally, cotranslationally removes the N-terminal methionine from nascent proteins. The N-terminal methionine is often cleaved when the second residue in the primary sequence is small and uncharged (Met-Ala-, Cys, Gly, Pro, Ser, Thr, or Val). This chain is Methionine aminopeptidase 2A, found in Arabidopsis thaliana (Mouse-ear cress).